Here is a 336-residue protein sequence, read N- to C-terminus: Fructose-1,6-bisphosphatase class 1 (336 aa).

Residues Glu-90, Asp-112, Leu-114, and Asp-115 each coordinate Mg(2+). Substrate is bound by residues 115–118 (DGSS), Asn-211, and Lys-277. Glu-283 contacts Mg(2+).

Belongs to the FBPase class 1 family. As to quaternary structure, homotetramer. It depends on Mg(2+) as a cofactor.

Its subcellular location is the cytoplasm. The catalysed reaction is beta-D-fructose 1,6-bisphosphate + H2O = beta-D-fructose 6-phosphate + phosphate. It participates in carbohydrate biosynthesis; gluconeogenesis. This is Fructose-1,6-bisphosphatase class 1 from Pseudomonas fluorescens (strain SBW25).